Here is a 474-residue protein sequence, read N- to C-terminus: Bifunctional protein HldE (474 aa).

The tract at residues 1–318 (MKLSMPRFDQ…RAVQREQGSE (318 aa)) is ribokinase. 194–197 (NLSE) is a binding site for ATP. D263 is an active-site residue. Positions 343–474 (FTNGCFDILH…AIVEKIRQKG (132 aa)) are cytidylyltransferase.

It in the N-terminal section; belongs to the carbohydrate kinase PfkB family. The protein in the C-terminal section; belongs to the cytidylyltransferase family. In terms of assembly, homodimer.

It catalyses the reaction D-glycero-beta-D-manno-heptose 7-phosphate + ATP = D-glycero-beta-D-manno-heptose 1,7-bisphosphate + ADP + H(+). It carries out the reaction D-glycero-beta-D-manno-heptose 1-phosphate + ATP + H(+) = ADP-D-glycero-beta-D-manno-heptose + diphosphate. It functions in the pathway nucleotide-sugar biosynthesis; ADP-L-glycero-beta-D-manno-heptose biosynthesis; ADP-L-glycero-beta-D-manno-heptose from D-glycero-beta-D-manno-heptose 7-phosphate: step 1/4. The protein operates within nucleotide-sugar biosynthesis; ADP-L-glycero-beta-D-manno-heptose biosynthesis; ADP-L-glycero-beta-D-manno-heptose from D-glycero-beta-D-manno-heptose 7-phosphate: step 3/4. Functionally, catalyzes the phosphorylation of D-glycero-D-manno-heptose 7-phosphate at the C-1 position to selectively form D-glycero-beta-D-manno-heptose-1,7-bisphosphate. Catalyzes the ADP transfer from ATP to D-glycero-beta-D-manno-heptose 1-phosphate, yielding ADP-D-glycero-beta-D-manno-heptose. This Pseudomonas aeruginosa (strain UCBPP-PA14) protein is Bifunctional protein HldE.